Here is a 150-residue protein sequence, read N- to C-terminus: SsrA-binding protein (150 aa).

Belongs to the SmpB family.

The protein resides in the cytoplasm. In terms of biological role, required for rescue of stalled ribosomes mediated by trans-translation. Binds to transfer-messenger RNA (tmRNA), required for stable association of tmRNA with ribosomes. tmRNA and SmpB together mimic tRNA shape, replacing the anticodon stem-loop with SmpB. tmRNA is encoded by the ssrA gene; the 2 termini fold to resemble tRNA(Ala) and it encodes a 'tag peptide', a short internal open reading frame. During trans-translation Ala-aminoacylated tmRNA acts like a tRNA, entering the A-site of stalled ribosomes, displacing the stalled mRNA. The ribosome then switches to translate the ORF on the tmRNA; the nascent peptide is terminated with the 'tag peptide' encoded by the tmRNA and targeted for degradation. The ribosome is freed to recommence translation, which seems to be the essential function of trans-translation. The sequence is that of SsrA-binding protein from Campylobacter jejuni subsp. doylei (strain ATCC BAA-1458 / RM4099 / 269.97).